A 127-amino-acid polypeptide reads, in one-letter code: MKQQVEVKELKEGKYVLADDEPCVIKSIQKSKPGKHGSAKARIEAIGIFDGQKRSIISSVSAKTYVPIVERKSAQVLSISSNIAQLMDMETYTTFELTIPEDYKDRVTEGKDITYIEAMGKMKIDLR.

Lys35 carries the hypusine modification.

It belongs to the eIF-5A family.

The protein resides in the cytoplasm. In terms of biological role, functions by promoting the formation of the first peptide bond. This is Translation initiation factor 5A from Methanococcoides burtonii (strain DSM 6242 / NBRC 107633 / OCM 468 / ACE-M).